The following is a 1358-amino-acid chain: Xanthine dehydrogenase/oxidase (1358 aa).

Residues 8 to 95 form the 2Fe-2S ferredoxin-type domain; it reads DELVFFVNGK…HVAVTTVEGI (88 aa). Residues C47, C52, C55, C77, C117, C120, C152, and C154 each coordinate [2Fe-2S] cluster. In terms of domain architecture, FAD-binding PCMH-type spans 255-440; it reads FKGERVMWIQ…LSVEIPYSKE (186 aa). Residues 283 to 290, F363, 373 to 377, D386, L430, and K448 each bind FAD; these read LVVGNTEV and ALGGN. 2 residues coordinate Mo-molybdopterin: Q796 and F827. 2 residues coordinate substrate: E831 and R909. Residue R941 participates in Mo-molybdopterin binding. Substrate-binding residues include F943 and T1039. A1108 contacts Mo-molybdopterin. E1290 functions as the Proton acceptor in the catalytic mechanism.

The protein belongs to the xanthine dehydrogenase family. As to quaternary structure, homodimer. Requires FAD as cofactor. Mo-molybdopterin serves as cofactor. It depends on [2Fe-2S] cluster as a cofactor. As to expression, detected in liver (at protein level).

Its subcellular location is the peroxisome. The protein resides in the cytoplasm. It catalyses the reaction xanthine + NAD(+) + H2O = urate + NADH + H(+). It carries out the reaction hypoxanthine + NAD(+) + H2O = xanthine + NADH + H(+). The catalysed reaction is xanthine + O2 + H2O = urate + H2O2. Key enzyme in purine degradation. Catalyzes the oxidation of hypoxanthine to xanthine. Catalyzes the oxidation of xanthine to uric acid. Contributes to the generation of reactive oxygen species. This chain is Xanthine dehydrogenase/oxidase (XDH), found in Gallus gallus (Chicken).